We begin with the raw amino-acid sequence, 219 residues long: Ribose-5-phosphate isomerase A (219 aa).

Substrate-binding positions include 29 to 32 (TGST), 82 to 85 (DGAD), and 95 to 98 (KGGG). The active-site Proton acceptor is the Glu-104. A substrate-binding site is contributed by Lys-122.

Belongs to the ribose 5-phosphate isomerase family. Homodimer.

The catalysed reaction is aldehydo-D-ribose 5-phosphate = D-ribulose 5-phosphate. The protein operates within carbohydrate degradation; pentose phosphate pathway; D-ribose 5-phosphate from D-ribulose 5-phosphate (non-oxidative stage): step 1/1. Catalyzes the reversible conversion of ribose-5-phosphate to ribulose 5-phosphate. In Chromobacterium violaceum (strain ATCC 12472 / DSM 30191 / JCM 1249 / CCUG 213 / NBRC 12614 / NCIMB 9131 / NCTC 9757 / MK), this protein is Ribose-5-phosphate isomerase A.